The sequence spans 379 residues: Acetylornithine aminotransferase (379 aa).

Residues 93-94 (GA) and Phe-120 contribute to the pyridoxal 5'-phosphate site. Arg-123 is a N(2)-acetyl-L-ornithine binding site. 205–208 (DEVQ) contacts pyridoxal 5'-phosphate. Lys-234 carries the post-translational modification N6-(pyridoxal phosphate)lysine. Ser-262 provides a ligand contact to N(2)-acetyl-L-ornithine. Pyridoxal 5'-phosphate is bound at residue Thr-263.

This sequence belongs to the class-III pyridoxal-phosphate-dependent aminotransferase family. ArgD subfamily. Homodimer. Requires pyridoxal 5'-phosphate as cofactor.

The protein localises to the cytoplasm. It carries out the reaction N(2)-acetyl-L-ornithine + 2-oxoglutarate = N-acetyl-L-glutamate 5-semialdehyde + L-glutamate. The protein operates within amino-acid biosynthesis; L-arginine biosynthesis; N(2)-acetyl-L-ornithine from L-glutamate: step 4/4. The polypeptide is Acetylornithine aminotransferase (Streptococcus mutans serotype c (strain ATCC 700610 / UA159)).